Here is a 116-residue protein sequence, read N- to C-terminus: Hydrogenase maturation factor HypA (116 aa).

His-2 contacts Ni(2+). The Zn(2+) site is built by Cys-73, Cys-76, Cys-90, and Cys-93.

Belongs to the HypA/HybF family.

Its function is as follows. Involved in the maturation of [NiFe] hydrogenases. Required for nickel insertion into the metal center of the hydrogenase. In Escherichia coli O6:H1 (strain CFT073 / ATCC 700928 / UPEC), this protein is Hydrogenase maturation factor HypA.